The primary structure comprises 478 residues: Zinc metalloproteinase/disintegrin VMP-II (478 aa).

Positions 1–20 are cleaved as a signal peptide; the sequence is MIQVLLVTICLAVFPYQGSS. The propeptide occupies 21 to 190; it reads IILESGNVND…KASQLNLTPE (170 aa). The region spanning 197 to 393 is the Peptidase M12B domain; the sequence is RYIELVIVAD…HNPQCMLNEP (197 aa). Ca(2+)-binding residues include glutamate 200 and aspartate 284. 3 disulfides stabilise this stretch: cysteine 308/cysteine 388, cysteine 348/cysteine 372, and cysteine 350/cysteine 355. Histidine 333 contributes to the Zn(2+) binding site. The active site involves glutamate 334. Positions 337 and 343 each coordinate Zn(2+). Residues cysteine 388 and asparagine 391 each contribute to the Ca(2+) site. A propeptide spanning residues 394 to 405 is cleaved from the precursor; it reads LGTDTVSRNELL. The 65-residue stretch at 414–478 folds into the Disintegrin domain; the sequence is GSPANPCCDA…ADCPRNRFHA (65 aa). Cystine bridges form between cysteine 420/cysteine 443, cysteine 434/cysteine 440, cysteine 439/cysteine 464, and cysteine 452/cysteine 471. The short motif at 456–458 is the Cell attachment site element; it reads RGD.

The protein belongs to the venom metalloproteinase (M12B) family. P-II subfamily. P-IIe sub-subfamily. As to quaternary structure, heterodimer; disulfide-linked (disintegrin). Zn(2+) is required as a cofactor. Expressed by the venom gland.

The protein localises to the secreted. Its function is as follows. Impairs hemostasis in the envenomed animal. In terms of biological role, this recombinant protein inhibits ADP-induced platelet aggregation in whole human blood and this effect is concentration-dependent with an IC(50) of 34 nM. The polypeptide is Zinc metalloproteinase/disintegrin VMP-II (Crotalus viridis viridis (Prairie rattlesnake)).